Here is a 162-residue protein sequence, read N- to C-terminus: NADH-quinone oxidoreductase subunit I (162 aa).

4Fe-4S ferredoxin-type domains lie at 53–83 and 93–122; these read LRRY…IESD and TRYD…ETHI. Residues cysteine 63, cysteine 66, cysteine 69, cysteine 73, cysteine 102, cysteine 105, cysteine 108, and cysteine 112 each coordinate [4Fe-4S] cluster.

It belongs to the complex I 23 kDa subunit family. As to quaternary structure, NDH-1 is composed of 14 different subunits. Subunits NuoA, H, J, K, L, M, N constitute the membrane sector of the complex. [4Fe-4S] cluster serves as cofactor.

It is found in the cell inner membrane. The catalysed reaction is a quinone + NADH + 5 H(+)(in) = a quinol + NAD(+) + 4 H(+)(out). Its function is as follows. NDH-1 shuttles electrons from NADH, via FMN and iron-sulfur (Fe-S) centers, to quinones in the respiratory chain. The immediate electron acceptor for the enzyme in this species is believed to be ubiquinone. Couples the redox reaction to proton translocation (for every two electrons transferred, four hydrogen ions are translocated across the cytoplasmic membrane), and thus conserves the redox energy in a proton gradient. This is NADH-quinone oxidoreductase subunit I from Bordetella avium (strain 197N).